The chain runs to 182 residues: Large ribosomal subunit protein uL6 (182 aa).

The protein belongs to the universal ribosomal protein uL6 family. In terms of assembly, part of the 50S ribosomal subunit.

Functionally, this protein binds to the 23S rRNA, and is important in its secondary structure. It is located near the subunit interface in the base of the L7/L12 stalk, and near the tRNA binding site of the peptidyltransferase center. The sequence is that of Large ribosomal subunit protein uL6 from Haloquadratum walsbyi (strain DSM 16790 / HBSQ001).